Reading from the N-terminus, the 303-residue chain is Probable 5-dehydro-4-deoxyglucarate dehydratase (303 aa).

The protein belongs to the DapA family.

It carries out the reaction 5-dehydro-4-deoxy-D-glucarate + H(+) = 2,5-dioxopentanoate + CO2 + H2O. Its pathway is carbohydrate acid metabolism; D-glucarate degradation; 2,5-dioxopentanoate from D-glucarate: step 2/2. This chain is Probable 5-dehydro-4-deoxyglucarate dehydratase, found in Pseudomonas putida (strain W619).